A 794-amino-acid chain; its full sequence is Protein sel-1 homolog 1 (794 aa).

The signal sequence occupies residues 1–21 (MRVRIGLTLLLCAVLLSLASA). Residues 21-50 (ASSDEEGSQDESLDSKTTLTSDESVKDHTT) form a disordered region. Positions 22 to 737 (SSDEEGSQDE…DMFTQLDMDQ (716 aa)) are interaction with ERLEC1, OS9 and SYVN1. Over 22-738 (SSDEEGSQDE…MFTQLDMDQL (717 aa)) the chain is Lumenal. Residues 23-32 (SDEEGSQDES) show a composition bias toward acidic residues. Residue S63 is modified to Phosphoserine. The segment covering 64–77 (EESELESSIQEEED) has biased composition (acidic residues). The tract at residues 64–109 (EESELESSIQEEEDSLKSQEGESVTEDISFLESPNPENKDYEEPKK) is disordered. The Fibronectin type-II domain occupies 122–170 (AHGEPCHFPFLFLDKEYDECTSDGREDGRLWCATTYDYKADEKWGFCET). Intrachain disulfides connect C127–C153 and C141–C168. Sel1-like repeat units lie at residues 183–218 (AEMM…SMNH), 219–254 (TKAL…EEGS), 255–290 (PKGQ…LGGN), 291–326 (LIAH…NHVA), 373–409 (VQAQ…NAGN), 410–446 (SHAM…DMGN), 447–482 (PVGQ…EQGW), 483–518 (VDGQ…QGGH), and 519–554 (ILAF…ERGR). N195 and N217 each carry an N-linked (GlcNAc...) asparagine glycan. N272 is a glycosylation site (N-linked (GlcNAc...) asparagine). Positions 352–537 (NSGMLEEDLI…MHASGTGVMR (186 aa)) are important for homodimerization and oligomerization. N431 carries N-linked (GlcNAc...) asparagine glycosylation. Residue N608 is glycosylated (N-linked (GlcNAc...) asparagine). 2 Sel1-like repeats span residues 627–662 (TVAR…EQQH) and 664–699 (AQAM…EASP). Residues 643-723 (TDVDYETAFI…VVYFLQYIRE (81 aa)) form an interaction with SYVN1 region. The interval 738-794 (LLGPEWDLYLMTIIALLLGTVIAYRQRQHQDMPAPRPPGPRPAPPQQEGPPEQQPPQ) is mediates retention in the endoplasmic reticulum. The helical transmembrane segment at 739–759 (LGPEWDLYLMTIIALLLGTVI) threads the bilayer. At 760–794 (AYRQRQHQDMPAPRPPGPRPAPPQQEGPPEQQPPQ) the chain is on the cytoplasmic side. The tract at residues 766-794 (HQDMPAPRPPGPRPAPPQQEGPPEQQPPQ) is disordered. A compositionally biased stretch (pro residues) spans 771–794 (APRPPGPRPAPPQQEGPPEQQPPQ).

Belongs to the sel-1 family. In terms of assembly, homodimer and homooligomer. May form a complex with ERLEC1, HSPA5, OS9, and SYVN1. Interacts with FOXRED2 and EDEM1. Interacts with LPL. Interacts with LMF1; may stabilize the complex formed by LPL and LMF1 and thereby promote the export of LPL dimers. Component of the HRD1 complex, which comprises at least SYNV1/HRD1, DERL1/2, FAM8A1, HERPUD1/HERP, OS9, SEL1L and UBE2J1. SYNV1 assembles with SEL1L and FAM8A1 through its transmembrane domains, but interaction with its cytoplasmic domain is required to confer stability to FAM8A1 and enhance recruitment of HERPUD1. The interaction with SYNV1/HRD1 is direct. (Microbial infection) Interacts with human cytomegalovirus protein UL148. Post-translationally, N-glycosylated. As to expression, highly expressed in pancreas.

It localises to the endoplasmic reticulum membrane. Its function is as follows. Plays a role in the endoplasmic reticulum quality control (ERQC) system also called ER-associated degradation (ERAD) involved in ubiquitin-dependent degradation of misfolded endoplasmic reticulum proteins. Enhances SYVN1 stability. Plays a role in LPL maturation and secretion. Required for normal differentiation of the pancreas epithelium, and for normal exocrine function and survival of pancreatic cells. May play a role in Notch signaling. In Homo sapiens (Human), this protein is Protein sel-1 homolog 1.